A 447-amino-acid chain; its full sequence is Phosphoglucosamine mutase (447 aa).

The Phosphoserine intermediate role is filled by S102. Positions 102, 241, 243, and 245 each coordinate Mg(2+). S102 carries the phosphoserine modification.

Belongs to the phosphohexose mutase family. The cofactor is Mg(2+). Post-translationally, activated by phosphorylation.

It carries out the reaction alpha-D-glucosamine 1-phosphate = D-glucosamine 6-phosphate. Functionally, catalyzes the conversion of glucosamine-6-phosphate to glucosamine-1-phosphate. The polypeptide is Phosphoglucosamine mutase (Hamiltonella defensa subsp. Acyrthosiphon pisum (strain 5AT)).